The following is a 397-amino-acid chain: Acetate kinase (397 aa).

N8 is a Mg(2+) binding site. ATP is bound at residue K15. R89 contributes to the substrate binding site. The active-site Proton donor/acceptor is the D146. Residues 206–210 (HLGNG), 281–283 (DLR), and 329–333 (GVGEN) each bind ATP. Residue E382 coordinates Mg(2+).

The protein belongs to the acetokinase family. As to quaternary structure, homodimer. Requires Mg(2+) as cofactor. It depends on Mn(2+) as a cofactor.

It is found in the cytoplasm. The enzyme catalyses acetate + ATP = acetyl phosphate + ADP. The protein operates within metabolic intermediate biosynthesis; acetyl-CoA biosynthesis; acetyl-CoA from acetate: step 1/2. Functionally, catalyzes the formation of acetyl phosphate from acetate and ATP. Can also catalyze the reverse reaction. This Bacillus thuringiensis subsp. konkukian (strain 97-27) protein is Acetate kinase.